We begin with the raw amino-acid sequence, 719 residues long: Polyphosphate kinase (719 aa).

ATP is bound at residue Asn-54. Residues Arg-379 and Arg-409 each contribute to the Mg(2+) site. The PLD phosphodiesterase domain occupies Thr-434–Thr-468. His-439 acts as the Phosphohistidine intermediate in catalysis. Residues Tyr-472, Arg-568, and His-596 each contribute to the ATP site.

Belongs to the polyphosphate kinase 1 (PPK1) family. Mg(2+) is required as a cofactor. Post-translationally, an intermediate of this reaction is the autophosphorylated ppk in which a phosphate is covalently linked to a histidine residue through a N-P bond.

It carries out the reaction [phosphate](n) + ATP = [phosphate](n+1) + ADP. Its function is as follows. Catalyzes the reversible transfer of the terminal phosphate of ATP to form a long-chain polyphosphate (polyP). The sequence is that of Polyphosphate kinase from Staphylococcus saprophyticus subsp. saprophyticus (strain ATCC 15305 / DSM 20229 / NCIMB 8711 / NCTC 7292 / S-41).